The chain runs to 324 residues: ATP-dependent 6-phosphofructokinase (324 aa).

Gly-11 is an ATP binding site. 21–25 (RAVVR) is an ADP binding site. Residues 72–73 (RE) and 102–105 (GNGS) contribute to the ATP site. Residue Asn-103 coordinates Mg(2+). Residue 126–128 (TID) participates in substrate binding. The active-site Proton acceptor is Asp-128. Arg-155 is a binding site for ADP. Residues Arg-163 and 170-172 (MGR) each bind substrate. ADP contacts are provided by residues 186-188 (GAD), Arg-212, and 214-216 (KKF). Residues Glu-223, Arg-248, and 254 to 257 (YIQR) contribute to the substrate site.

Belongs to the phosphofructokinase type A (PFKA) family. ATP-dependent PFK group I subfamily. Prokaryotic clade 'B1' sub-subfamily. Homotetramer. Mg(2+) is required as a cofactor.

It is found in the cytoplasm. The enzyme catalyses beta-D-fructose 6-phosphate + ATP = beta-D-fructose 1,6-bisphosphate + ADP + H(+). The protein operates within carbohydrate degradation; glycolysis; D-glyceraldehyde 3-phosphate and glycerone phosphate from D-glucose: step 3/4. With respect to regulation, allosterically activated by ADP and other diphosphonucleosides, and allosterically inhibited by phosphoenolpyruvate. Catalyzes the phosphorylation of D-fructose 6-phosphate to fructose 1,6-bisphosphate by ATP, the first committing step of glycolysis. The chain is ATP-dependent 6-phosphofructokinase from Persephonella marina (strain DSM 14350 / EX-H1).